Here is a 474-residue protein sequence, read N- to C-terminus: tRNA-2-methylthio-N(6)-dimethylallyladenosine synthase (474 aa).

Residues 3–120 (QKLHIKTWGC…LPEMINQIRG (118 aa)) form the MTTase N-terminal domain. Positions 12, 49, 83, 157, 161, and 164 each coordinate [4Fe-4S] cluster. One can recognise a Radical SAM core domain in the interval 143–375 (RAEGPTAFVS…QERINQQAAQ (233 aa)). One can recognise a TRAM domain in the interval 378-441 (RRMLGTEQRV…TNSLRGEVVR (64 aa)).

This sequence belongs to the methylthiotransferase family. MiaB subfamily. In terms of assembly, monomer. It depends on [4Fe-4S] cluster as a cofactor.

It is found in the cytoplasm. It catalyses the reaction N(6)-dimethylallyladenosine(37) in tRNA + (sulfur carrier)-SH + AH2 + 2 S-adenosyl-L-methionine = 2-methylsulfanyl-N(6)-dimethylallyladenosine(37) in tRNA + (sulfur carrier)-H + 5'-deoxyadenosine + L-methionine + A + S-adenosyl-L-homocysteine + 2 H(+). In terms of biological role, catalyzes the methylthiolation of N6-(dimethylallyl)adenosine (i(6)A), leading to the formation of 2-methylthio-N6-(dimethylallyl)adenosine (ms(2)i(6)A) at position 37 in tRNAs that read codons beginning with uridine. This chain is tRNA-2-methylthio-N(6)-dimethylallyladenosine synthase, found in Haemophilus influenzae (strain PittGG).